An 84-amino-acid polypeptide reads, in one-letter code: Toxin BmKaTx16 (84 aa).

The N-terminal stretch at 1–19 (MNYLVMISFALLLMTGVES) is a signal peptide. Positions 21–83 (RDAYIAKPHN…VPIRVPGKCH (63 aa)) constitute an LCN-type CS-alpha/beta domain. Cystine bridges form between cysteine 31-cysteine 82, cysteine 35-cysteine 55, cysteine 41-cysteine 65, and cysteine 45-cysteine 67. Position 84 (arginine 84) is a propeptide, removed by a carboxypeptidase.

The protein belongs to the long (4 C-C) scorpion toxin superfamily. Sodium channel inhibitor family. Alpha subfamily. Expressed by the venom gland.

The protein resides in the secreted. Its function is as follows. Alpha toxins bind voltage-independently at site-3 of sodium channels (Nav) and inhibit the inactivation of the activated channels, thereby blocking neuronal transmission. The protein is Toxin BmKaTx16 of Olivierus martensii (Manchurian scorpion).